The sequence spans 337 residues: Protein FAM169B (337 aa).

Residues 278 to 326 (STVHPKCSEEDTDTPGQASQEDGPTQFNHGESHKEWAVGEPERTQNGRR) are disordered. Residues 291-306 (TPGQASQEDGPTQFNH) are compositionally biased toward polar residues. Residues 307–322 (GESHKEWAVGEPERTQ) are compositionally biased toward basic and acidic residues.

This sequence belongs to the FAM169 family.

The protein is Protein FAM169B (Fam169b) of Mus musculus (Mouse).